A 204-amino-acid chain; its full sequence is Ras-related protein Rab-7L1 (204 aa).

Residues S33, K34, H35, Y36, K37, and T39 each coordinate GTP. The Effector region motif lies at 36–44 (YKSTVGVDF). The residue at position 71 (T71) is a Phosphothreonine; by LRRK2. S72 carries the post-translational modification Phosphoserine. Residues K126, V156, and K157 each contribute to the GTP site. S-geranylgeranyl cysteine attachment occurs at residues C203 and C204.

It belongs to the small GTPase superfamily. Rab family. In terms of assembly, interacts with LRRK2 (via the N-terminus); this interaction is direct and stimulates kinase activity. As to expression, expressed predominantly in kidney and much less in brain, heart, muscle, fat, liver, spleen, adrenal gland, ovary, thymus and lung. Not expressed in testis and intestine.

It localises to the cell membrane. It is found in the cytoplasm. The protein localises to the perinuclear region. The protein resides in the golgi apparatus. Its subcellular location is the golgi apparatus membrane. It localises to the trans-Golgi network. It is found in the cytoskeleton. The small GTPases Rab are key regulators in vesicle trafficking. Essential for maintaining the integrity of endosome-trans-Golgi network structure. Together with LRRK2, plays a role in the retrograde trafficking pathway for recycling proteins, such as mannose 6 phosphate receptor (M6PR), between lysosomes and the Golgi apparatus in a retromer-dependent manner. Recruits LRRK2 to the Golgi apparatus and stimulates LRRK2 kinase activity. Stimulates phosphorylation of RAB10 'Thr-73' by LRRK2. Regulates also neuronal process morphology in the intact central nervous system (CNS). This Rattus norvegicus (Rat) protein is Ras-related protein Rab-7L1 (Rab29).